A 307-amino-acid polypeptide reads, in one-letter code: Dihydroorotate dehydrogenase B (NAD(+)), catalytic subunit (307 aa).

Residues serine 21 and 45 to 46 (KA) each bind FMN. Residues lysine 45 and 69–73 (NAIGL) each bind substrate. Asparagine 101 and asparagine 129 together coordinate FMN. Position 129 (asparagine 129) interacts with substrate. Catalysis depends on cysteine 132, which acts as the Nucleophile. Residues lysine 167 and isoleucine 193 each contribute to the FMN site. 194 to 195 (NT) is a binding site for substrate. Residues glycine 219, 245–246 (GG), and 267–268 (GT) each bind FMN.

It belongs to the dihydroorotate dehydrogenase family. Type 1 subfamily. Heterotetramer of 2 PyrK and 2 PyrD type B subunits. The cofactor is FMN.

It localises to the cytoplasm. The enzyme catalyses (S)-dihydroorotate + NAD(+) = orotate + NADH + H(+). The protein operates within pyrimidine metabolism; UMP biosynthesis via de novo pathway; orotate from (S)-dihydroorotate (NAD(+) route): step 1/1. Functionally, catalyzes the conversion of dihydroorotate to orotate with NAD(+) as electron acceptor. The protein is Dihydroorotate dehydrogenase B (NAD(+)), catalytic subunit (pyrD) of Cutibacterium acnes (strain DSM 16379 / KPA171202) (Propionibacterium acnes).